We begin with the raw amino-acid sequence, 188 residues long: Large ribosomal subunit protein uL22 (188 aa).

The disordered stretch occupies residues 155 to 188; that stretch reads STPEGAKKGKKKKGTKDAVEKSSKRVKTAATAAH.

It belongs to the universal ribosomal protein uL22 family.

This is Large ribosomal subunit protein uL22 (RpL17) from Agriotes lineatus (Lined click beetle).